The chain runs to 757 residues: MPALPLDQLQITHKDPKTGKLRTSPALHPEQKADRYFVLYKPPPKDNIPALVEEYLERATFVANDLDWLLALPHDKFWCQVIFDETLQKCLDSYLRYVPRKFDEGVASAPEVVDMQKRLHRSVFLTFLRMSTHKESKDHFISPSAFGEILYNNFLFDIPKILDLCVLFGKGNSPLLQKMIGNIFTQQPSYYSDLDETLPTILQVFSNILQHCGLQGDGANTTPQKLEERGRLTPSDMPLLELKDIVLYLCDTCTTLWAFLDIFPLACQTFQKHDFCYRLASFYEAAIPEMESAIKKRRLEDSKLLGDLWQRLSHSRKKLMEIFHIILNQICLLPILESSCDNIQGFIEEFLQIFSSLLQEKRFLRDYDALFPVAEDISLLQQASSVLDETRTAYILQAVESAWEGVDRRKATDAKDPSVIEEPNGEPNGVTVTAEAVSQASSHPENSEEEECMGAAAAVGPAMCGVELDSLISQVKDLLPDLGEGFILACLEYYHYDPEQVINNILEERLAPTLSQLDRNLDREMKPDPTPLLTSRHNVFQNDEFDVFSRDSVDLSRVHKGKSTRKEENTRSLLNDKRAVAAQRQRYEQYSVVVEEVPLQPGESLPYHSVYYEDEYDDTYDGNQVGANDADSDDELISRRPFTIPQVLRTKVPREGQEEDDDDEEDDADEEAPKPDHFVQDPAVLREKAEARRMAFLAKKGYRHDSSTAVAGSPRGHGQSRETTQERRKKEANKATRANHNRRTMADRKRSKGMIPS.

At threonine 233 the chain carries Phosphothreonine. Position 447 is a phosphoserine (serine 447). One can recognise a CUE domain in the interval glutamate 467–leucine 510. Disordered regions lie at residues aspartate 617 to glutamate 687 and lysine 699 to serine 757. Position 632 is a phosphoserine (serine 632). A compositionally biased stretch (acidic residues) spans glutamine 657 to glutamate 670. Basic and acidic residues predominate over residues glutamate 671–glutamate 687. Serine 713 is subject to Phosphoserine. Basic and acidic residues predominate over residues glutamine 719 to lysine 734.

Belongs to the ASCC2 family. In terms of assembly, identified in the ASCC complex that contains ASCC1, ASCC2 and ASCC3. Interacts directly with ASCC3. The ASCC complex interacts with ALKBH3. Interacts (via CUE domain) with 'Lys-63'-linked polyubiquitin chains, but not with 'Lys-48'-linked polyubiquitin chains. Part of the ASC-1 complex, that contains TRIP4, ASCC1, ASCC2 and ASCC3. Component of the RQT (ribosome quality control trigger) complex, that contains ASCC2, ASCC3 and TRIP4. Interacts with CSRP1. Interacts with PRPF8, a component of the spliceosome. Interacts with ZCCHC4. In terms of tissue distribution, ubiquitous.

The protein localises to the nucleus. It is found in the nucleus speckle. In terms of biological role, ubiquitin-binding protein involved in DNA repair and rescue of stalled ribosomes. Plays a role in DNA damage repair as component of the ASCC complex. Recruits ASCC3 and ALKBH3 to sites of DNA damage by binding to polyubiquitinated proteins that have 'Lys-63'-linked polyubiquitin chains. Part of the ASC-1 complex that enhances NF-kappa-B, SRF and AP1 transactivation. Involved in activation of the ribosome quality control (RQC) pathway, a pathway that degrades nascent peptide chains during problematic translation. Specifically recognizes and binds RPS20/uS10 ubiquitinated by ZNF598, promoting recruitment of the RQT (ribosome quality control trigger) complex on stalled ribosomes, followed by disassembly of stalled ribosomes. The protein is Activating signal cointegrator 1 complex subunit 2 (ASCC2) of Homo sapiens (Human).